The chain runs to 196 residues: UPF0301 protein BF2109 (196 aa).

This sequence belongs to the UPF0301 (AlgH) family.

The polypeptide is UPF0301 protein BF2109 (Bacteroides fragilis (strain ATCC 25285 / DSM 2151 / CCUG 4856 / JCM 11019 / LMG 10263 / NCTC 9343 / Onslow / VPI 2553 / EN-2)).